The sequence spans 517 residues: Sphingolipid C9-methyltransferase A (517 aa).

2 consecutive transmembrane segments (helical) span residues 58-78 and 80-100; these read LLIL…GGGL and TTIF…WSIA. S-adenosyl-L-methionine is bound by residues 223–224, 286–291, and 316–317; these read YT, TLGRNQ, and YR. Asn-290 is a glycosylation site (N-linked (GlcNAc...) asparagine). The N-linked (GlcNAc...) asparagine glycan is linked to Asn-478.

This sequence belongs to the CFA/CMAS family.

It is found in the membrane. It catalyses the reaction a (4E,8E)-4-sphinga-4,8-dienine ceramide + S-adenosyl-L-methionine = a 9-methyl-(4E,8E)-sphinga-4,8-dienine ceramide + S-adenosyl-L-homocysteine + H(+). It participates in lipid metabolism; sphingolipid metabolism. Its function is as follows. Catalyzes methylation of the sphingoid base component of glucosylceramides (GluCers) at the C9-position. Sphingolipid C9-methylation requires 4,8-desaturated ceramides as substrates. Glucosylceramides play important roles in growth, differentiation and pathogenicity. The methyl group at the C9-position distinguishes fungal glucosylceramides from those of plants and animals and may thus play a role in host-pathogen interactions enabling the host to recognize the fungal attack and initiate specific defense responses. This chain is Sphingolipid C9-methyltransferase A, found in Emericella nidulans (strain FGSC A4 / ATCC 38163 / CBS 112.46 / NRRL 194 / M139) (Aspergillus nidulans).